A 369-amino-acid chain; its full sequence is UPF0284 protein sll1500 (369 aa).

It belongs to the UPF0284 family.

The protein is UPF0284 protein sll1500 of Synechocystis sp. (strain ATCC 27184 / PCC 6803 / Kazusa).